Reading from the N-terminus, the 291-residue chain is Trimeric intracellular cation channel type B (291 aa).

Residues 1 to 15 (MESPWNELTLAFSRT) are Lumenal-facing. Residues 16–33 (SMFPFFDIAHYLVSVMAL) form a helical membrane-spanning segment. The Cytoplasmic portion of the chain corresponds to 34–47 (KHQPGAAALAWKNP). The helical transmembrane segment at 48-69 (LSSWFTAMLHCFGGGILSCVLL) threads the bilayer. Residues 70-80 (AEPPLRFLANN) lie on the Lumenal side of the membrane. The helical transmembrane segment at 81–100 (TNILLASSIWYIAFFCPCDL) threads the bilayer. Over 101–103 (ISQ) the chain is Cytoplasmic. A helical membrane pass occupies residues 104–122 (AYSFLPVQLLAAGMKEVTR). A 1,2-diacyl-sn-glycero-3-phospho-(1D-myo-inositol-4,5-bisphosphate) is bound by residues Lys118 and Arg122. The Lumenal portion of the chain corresponds to 123-138 (TWKIVGGVTHANSYYK). A helical membrane pass occupies residues 139 to 156 (NGWIVMIAVGWARGAGGS). The Cytoplasmic portion of the chain corresponds to 157–179 (IITNFEQLVKGCWKPEAEEWLKM). The chain crosses the membrane as a helical span at residues 180–196 (SYPAKVTLLGSVIFTFQ). Over 197–207 (QTKYLAISKHN) the chain is Lumenal. The helical transmembrane segment at 208-225 (LMFLFTVFLVATKITMMI) threads the bilayer. Over 226–291 (TKTALVPFAC…VKKKHSKKTE (66 aa)) the chain is Cytoplasmic. The segment at 257–291 (KSETKSSFNGTGSSTSKPVANASDKVKKKHSKKTE) is disordered. Positions 261–274 (KSSFNGTGSSTSKP) are enriched in polar residues. Position 262 is a phosphoserine (Ser262). Basic residues predominate over residues 282–291 (VKKKHSKKTE).

The protein belongs to the TMEM38 family. In terms of assembly, homotrimer; conformation seems to be controled by binding to diacylglycerol (DAG).

Its subcellular location is the endoplasmic reticulum membrane. The catalysed reaction is K(+)(in) = K(+)(out). With respect to regulation, channel activity is activated by increased cytosolic Ca(2+) levels and blocked by luminal high Ca(2+) levels. Its function is as follows. Intracellular monovalent cation channel required for maintenance of rapid intracellular calcium release. Acts as a potassium counter-ion channel that functions in synchronization with calcium release from intracellular stores. Activated by increased cytosolic Ca(2+) levels. The chain is Trimeric intracellular cation channel type B (TMEM38B) from Bos taurus (Bovine).